We begin with the raw amino-acid sequence, 498 residues long: MRNNPITSDPVVSTLKEQNQGRIAQIIGPVLDVIFPSGKMPNIYNALIIKGRDTVGHQINVTCEVQQLLGNNRVRAVAMSATDGLMRGMKVIDTGAPLSVPVGGATLGRIFNVLGEPVDNLGPVDTRTTFPIHRSAPAFIQLDTKLSIFETGIKVVDLLAPYRRGGKIGLFGGAGVGKTVLIMELINNIAKAHGGVSVFGGVGERTREGNDLYMEMKESGVINEKNIAESKVALVYGQMNEPPGARMRVGLTALTMAEYFRDVNEQDVLLFIDNIFRFVQAGSEVSALLGRMPSAVGYQPTLSTEMGSLQERITSTKEGSITSIQAVYVPADDLTDPAPATTFAHLDATTVLSRGLAAKGIYPAVDPLDSTSTMLQPRIVGEEHYETAQRVKQTSQRYKELQDIIAILGLDELSEEDRLTVARARKIERFLSQPFFVAEVFTGSPGKYVGLAETIRGFQFILSGELDGLPEQAFYLVGNIDEATAKAMNLEEESKLKK.

172–179 lines the ATP pocket; that stretch reads GGAGVGKT.

Belongs to the ATPase alpha/beta chains family. F-type ATPases have 2 components, CF(1) - the catalytic core - and CF(0) - the membrane proton channel. CF(1) has five subunits: alpha(3), beta(3), gamma(1), delta(1), epsilon(1). CF(0) has four main subunits: a(1), b(1), b'(1) and c(9-12).

It localises to the plastid. It is found in the chloroplast thylakoid membrane. It carries out the reaction ATP + H2O + 4 H(+)(in) = ADP + phosphate + 5 H(+)(out). Its function is as follows. Produces ATP from ADP in the presence of a proton gradient across the membrane. The catalytic sites are hosted primarily by the beta subunits. In Phalaenopsis aphrodite subsp. formosana (Moth orchid), this protein is ATP synthase subunit beta, chloroplastic.